A 379-amino-acid chain; its full sequence is UPF0754 membrane protein ABC1518 (379 aa).

2 helical membrane-spanning segments follow: residues M1–T21 and L358–F378.

The protein belongs to the UPF0754 family.

Its subcellular location is the cell membrane. The chain is UPF0754 membrane protein ABC1518 from Shouchella clausii (strain KSM-K16) (Alkalihalobacillus clausii).